The chain runs to 204 residues: UPF0637 protein lmo1065 (204 aa).

It belongs to the UPF0637 family.

The protein is UPF0637 protein lmo1065 of Listeria monocytogenes serovar 1/2a (strain ATCC BAA-679 / EGD-e).